We begin with the raw amino-acid sequence, 182 residues long: Large ribosomal subunit protein uL6 (182 aa).

Belongs to the universal ribosomal protein uL6 family. Part of the 50S ribosomal subunit.

Its function is as follows. This protein binds to the 23S rRNA, and is important in its secondary structure. It is located near the subunit interface in the base of the L7/L12 stalk, and near the tRNA binding site of the peptidyltransferase center. This is Large ribosomal subunit protein uL6 from Aeropyrum pernix (strain ATCC 700893 / DSM 11879 / JCM 9820 / NBRC 100138 / K1).